We begin with the raw amino-acid sequence, 288 residues long: Probable coatomer subunit epsilon (288 aa).

Residue S262 is modified to Phosphoserine.

Belongs to the COPE family. Oligomeric complex that consists of at least the alpha, beta, beta', gamma, delta, epsilon and zeta subunits.

Its subcellular location is the cytoplasm. It localises to the golgi apparatus membrane. The protein resides in the cytoplasmic vesicle. It is found in the COPI-coated vesicle membrane. In terms of biological role, the coatomer is a cytosolic protein complex that binds to dilysine motifs and reversibly associates with Golgi non-clathrin-coated vesicles, which further mediate biosynthetic protein transport from the ER, via the Golgi up to the trans Golgi network. The coatomer complex is required for budding from Golgi membranes, and is essential for the retrograde Golgi-to-ER transport of dilysine-tagged proteins. This chain is Probable coatomer subunit epsilon (sec28), found in Schizosaccharomyces pombe (strain 972 / ATCC 24843) (Fission yeast).